We begin with the raw amino-acid sequence, 390 residues long: MVAPLVSESQSSSIEETDEQQQQYQQLARRRTIQSDLVDIEAESISSALPEGFNYEKKTTATRFLDKTQKYYPVILNIVHGAIWGVLVRKGLMSLTTYSGSFLSGVIWANFAACVVMGLAIDGEVFWIRLLEEKDYPNKGAIPVYTGLTTGFCGTVSSFSSVILEAFNKAADTDIGVRHHYPNGAYGIMQFLAVILAQFGLSIMGFHMGKQFSAVVDNYLPLVTKRIYKVLELTSMILGVVLVVITCILIGVKKQGSWRSWTFSMLFAPFGALLRYYLSKFLNNKVSNFPLGTFTANFLGTLLLAVFTLLARGKLPGGKGHIVTNTIALHVLEGLDDGFCGGLTTVSTFVVELFGLKTLFSYRYGTISILVCFAGVVLILGSYNWSVGLD.

The interval 1–22 (MVAPLVSESQSSSIEETDEQQQ) is disordered. Topologically, residues 1–72 (MVAPLVSESQ…RFLDKTQKYY (72 aa)) are cytoplasmic. A helical membrane pass occupies residues 73 to 93 (PVILNIVHGAIWGVLVRKGLM). Residues 94 to 100 (SLTTYSG) are Extracellular-facing. A helical transmembrane segment spans residues 101–121 (SFLSGVIWANFAACVVMGLAI). The Cytoplasmic portion of the chain corresponds to 122–143 (DGEVFWIRLLEEKDYPNKGAIP). The helical transmembrane segment at 144–164 (VYTGLTTGFCGTVSSFSSVIL) threads the bilayer. The Extracellular portion of the chain corresponds to 165-185 (EAFNKAADTDIGVRHHYPNGA). A helical membrane pass occupies residues 186 to 206 (YGIMQFLAVILAQFGLSIMGF). Over 207–229 (HMGKQFSAVVDNYLPLVTKRIYK) the chain is Cytoplasmic. Residues 230–250 (VLELTSMILGVVLVVITCILI) traverse the membrane as a helical segment. Over 251–256 (GVKKQG) the chain is Extracellular. A helical membrane pass occupies residues 257-279 (SWRSWTFSMLFAPFGALLRYYLS). The Cytoplasmic segment spans residues 280-290 (KFLNNKVSNFP). Residues 291-311 (LGTFTANFLGTLLLAVFTLLA) form a helical membrane-spanning segment. Topologically, residues 312–338 (RGKLPGGKGHIVTNTIALHVLEGLDDG) are extracellular. A helical membrane pass occupies residues 339–359 (FCGGLTTVSTFVVELFGLKTL). At 360–368 (FSYRYGTIS) the chain is on the cytoplasmic side. A helical membrane pass occupies residues 369-389 (ILVCFAGVVLILGSYNWSVGL). Asp-390 is a topological domain (extracellular).

The protein belongs to the fluoride channel Fluc/FEX (TC 1.A.43) family.

The protein localises to the cell membrane. The enzyme catalyses fluoride(in) = fluoride(out). Fluoride channel required for the rapid expulsion of cytoplasmic fluoride. The protein is Fluoride export protein 1 of Candida albicans (strain SC5314 / ATCC MYA-2876) (Yeast).